We begin with the raw amino-acid sequence, 428 residues long: Flotillin-2 (428 aa).

3 S-palmitoyl cysteine lipidation sites follow: cysteine 4, cysteine 19, and cysteine 20.

Belongs to the band 7/mec-2 family. Flotillin subfamily. In terms of assembly, heterooligomeric complex of flotillins 1 and 2. Palmitoylation may be required for the formation of higher order complexes and for neurite outgrowth in cultured neural stem cells. As to expression, normally expressed in growing retinal exons of newly differentiated ganglion cells at the retinal margin. After optic nerve injury, expressed in all retinal ganglion cells and retinal axons. Also expressed in endothelial cells, spinal cord, larval and adult skin, muscle processes, thymus and gill macrophages.

Its subcellular location is the membrane. It localises to the endosome. In terms of biological role, may play a role in axon growth and regeneration. May be involved in epidermal cell adhesion and epidermal structure and function. The chain is Flotillin-2 (flot2) from Carassius auratus (Goldfish).